Consider the following 253-residue polypeptide: Protein phosphatase CheZ (253 aa).

Positions 1 to 84 are disordered; sequence MTQEELDALM…EWPPPPPTEE (84 aa). Positions 21-69 are enriched in basic and acidic residues; the sequence is LETKEETKEEAKEEAKEEAKEEAKEKEEIKEESSSQKMTVKKEDAEKYG.

This sequence belongs to the CheZ family. In terms of assembly, interacts with ChePep; this interaction is essential for each other polar localization.

It is found in the cytoplasm. Functionally, plays an important role in bacterial chemotaxis signal transduction pathway by accelerating the dephosphorylation of phosphorylated CheY (CheY-P). Also dephosphorylates CheV2 but not CheV1 or CheV3. In addition, forms a distinct chemotaxis regulatory complex with ChePep independently of the core chemotaxis signaling proteins. The protein is Protein phosphatase CheZ of Helicobacter pylori (strain ATCC 700392 / 26695) (Campylobacter pylori).